A 612-amino-acid polypeptide reads, in one-letter code: Poly(A) RNA polymerase, mitochondrial (612 aa).

A mitochondrion-targeting transit peptide spans 1–57 (MNSLVRRSAQQLSLWRTYCIKHNASEAASPGRNAGRPNYEEFIGRHQRQAQCSIVVQ). ATP-binding positions include 83–89 (YCVRQDE) and 228–229 (GC). Mg(2+)-binding residues include D230 and D232. A PAP-associated domain is found at 427 to 463 (SLSELLLQFFEFYSQFDFHNRAISLNEGKPLSKPDHS). 2 disordered regions span residues 555-574 (AGATSSSTPPTPAITYKSAS) and 588-612 (SELKQLRGSGSSVPTSSPNNRRRSR).

It belongs to the DNA polymerase type-B-like family. Requires Mg(2+) as cofactor. The cofactor is Mn(2+).

Its subcellular location is the mitochondrion. It carries out the reaction RNA(n) + ATP = RNA(n)-3'-adenine ribonucleotide + diphosphate. Its function is as follows. Polymerase that creates the 3' poly(A) tail of mitochondrial transcripts. This is not required for transcript stability or translation but may maintain mRNA integrity by protecting 3' termini from degradation. The chain is Poly(A) RNA polymerase, mitochondrial from Drosophila melanogaster (Fruit fly).